A 90-amino-acid polypeptide reads, in one-letter code: UPF0237 protein PAE3582 (90 aa).

Positions 5-74 (VVSVLGADRV…LEEEGKRLGV (70 aa)) constitute an ACT domain.

This sequence belongs to the UPF0237 family.

This is UPF0237 protein PAE3582 from Pyrobaculum aerophilum (strain ATCC 51768 / DSM 7523 / JCM 9630 / CIP 104966 / NBRC 100827 / IM2).